Reading from the N-terminus, the 194-residue chain is Fe/S biogenesis protein NfuA (194 aa).

The [4Fe-4S] cluster site is built by Cys151 and Cys154.

It belongs to the NfuA family. Homodimer. It depends on [4Fe-4S] cluster as a cofactor.

In terms of biological role, involved in iron-sulfur cluster biogenesis. Binds a 4Fe-4S cluster, can transfer this cluster to apoproteins, and thereby intervenes in the maturation of Fe/S proteins. Could also act as a scaffold/chaperone for damaged Fe/S proteins. The chain is Fe/S biogenesis protein NfuA from Vibrio vulnificus (strain CMCP6).